The primary structure comprises 349 residues: Heat-inducible transcription repressor HrcA (349 aa).

The protein belongs to the HrcA family.

Functionally, negative regulator of class I heat shock genes (grpE-dnaK-dnaJ and groELS operons). Prevents heat-shock induction of these operons. The sequence is that of Heat-inducible transcription repressor HrcA from Xylella fastidiosa (strain M23).